We begin with the raw amino-acid sequence, 308 residues long: Leucine-rich repeat-containing protein 59 (308 aa).

The Cytoplasmic portion of the chain corresponds to 1–248; sequence MARANGRSQN…LARRQSRLRK (248 aa). LRR repeat units lie at residues 10-31, 40-61, 63-84, 86-107, and 109-128; these read NLRDKLDGNELDLSLSDLSEVP, KATALDLSCNKLTSLPDDFCNL, YIVRLDLSKNQIAQLPSEFGRL, NLQHLDLLQNRIVALPVSFAQL, and SLKWLDLKDNPLKPALAKVA. Positions 154-223 form a coiled coil; it reads DHERELQRKL…NNNKKKAEEE (70 aa). Basic and acidic residues-rich tracts occupy residues 170-187, 194-203, and 218-237; these read KQRLEAQQRVKEEQDREL, QQKERKRRDY, and KKAEEEPSENHKPVPTPKEK. Residues 170–240 are disordered; that stretch reads KQRLEAQQRV…VPTPKEKKLA (71 aa). The chain crosses the membrane as a helical span at residues 249-269; it reads IACILLFGLMVALLGVVACRF. The Lumenal segment spans residues 270 to 308; that stretch reads TDLKTFEVCRSVNAVYKETLSALHSNPVLERFLQDPSSQ.

Interacts with SGO1.

The protein localises to the microsome membrane. It is found in the endoplasmic reticulum membrane. The protein resides in the nucleus envelope. Its function is as follows. Required for nuclear import of FGF1. The polypeptide is Leucine-rich repeat-containing protein 59 (lrrc59) (Xenopus tropicalis (Western clawed frog)).